Consider the following 282-residue polypeptide: 2,3,4,5-tetrahydropyridine-2,6-dicarboxylate N-succinyltransferase (282 aa).

Substrate is bound by residues arginine 109 and aspartate 146.

The protein belongs to the transferase hexapeptide repeat family. In terms of assembly, homotrimer.

It localises to the cytoplasm. It carries out the reaction (S)-2,3,4,5-tetrahydrodipicolinate + succinyl-CoA + H2O = (S)-2-succinylamino-6-oxoheptanedioate + CoA. Its pathway is amino-acid biosynthesis; L-lysine biosynthesis via DAP pathway; LL-2,6-diaminopimelate from (S)-tetrahydrodipicolinate (succinylase route): step 1/3. This is 2,3,4,5-tetrahydropyridine-2,6-dicarboxylate N-succinyltransferase from Bartonella henselae (strain ATCC 49882 / DSM 28221 / CCUG 30454 / Houston 1) (Rochalimaea henselae).